The primary structure comprises 110 residues: Phosphoribosyl-ATP pyrophosphatase (110 aa).

This sequence belongs to the PRA-PH family.

The protein localises to the cytoplasm. It carries out the reaction 1-(5-phospho-beta-D-ribosyl)-ATP + H2O = 1-(5-phospho-beta-D-ribosyl)-5'-AMP + diphosphate + H(+). Its pathway is amino-acid biosynthesis; L-histidine biosynthesis; L-histidine from 5-phospho-alpha-D-ribose 1-diphosphate: step 2/9. In Pseudomonas savastanoi pv. phaseolicola (strain 1448A / Race 6) (Pseudomonas syringae pv. phaseolicola (strain 1448A / Race 6)), this protein is Phosphoribosyl-ATP pyrophosphatase.